We begin with the raw amino-acid sequence, 622 residues long: 1-deoxy-D-xylulose-5-phosphate synthase (622 aa).

Thiamine diphosphate is bound by residues His80 and 121-123 (GHS). A Mg(2+)-binding site is contributed by Asp152. Thiamine diphosphate contacts are provided by residues 153-154 (GA), Asn181, Tyr288, and Glu370. Position 181 (Asn181) interacts with Mg(2+).

The protein belongs to the transketolase family. DXPS subfamily. Homodimer. Mg(2+) is required as a cofactor. Thiamine diphosphate serves as cofactor.

It carries out the reaction D-glyceraldehyde 3-phosphate + pyruvate + H(+) = 1-deoxy-D-xylulose 5-phosphate + CO2. It functions in the pathway metabolic intermediate biosynthesis; 1-deoxy-D-xylulose 5-phosphate biosynthesis; 1-deoxy-D-xylulose 5-phosphate from D-glyceraldehyde 3-phosphate and pyruvate: step 1/1. Its function is as follows. Catalyzes the acyloin condensation reaction between C atoms 2 and 3 of pyruvate and glyceraldehyde 3-phosphate to yield 1-deoxy-D-xylulose-5-phosphate (DXP). This Shewanella baltica (strain OS185) protein is 1-deoxy-D-xylulose-5-phosphate synthase.